The primary structure comprises 131 residues: Small ribosomal subunit protein uS8 (131 aa).

Belongs to the universal ribosomal protein uS8 family. As to quaternary structure, part of the 30S ribosomal subunit. Contacts proteins S5 and S12.

In terms of biological role, one of the primary rRNA binding proteins, it binds directly to 16S rRNA central domain where it helps coordinate assembly of the platform of the 30S subunit. The sequence is that of Small ribosomal subunit protein uS8 from Chlorobium chlorochromatii (strain CaD3).